We begin with the raw amino-acid sequence, 128 residues long: Fumarate reductase subunit C (128 aa).

Transmembrane regions (helical) follow at residues 31–51 (ATCIATIWFCLVLLYGVISLG), 67–87 (VVILNIISLAGLLYHAATLYV), and 106–126 (ILKNALWAITGLVSLLALVLV).

Belongs to the FrdC family. In terms of assembly, part of an enzyme complex containing four subunits: a flavoprotein (FrdA), an iron-sulfur protein (FrdB), and two hydrophobic anchor proteins (FrdC and FrdD).

It is found in the cell inner membrane. Its function is as follows. Anchors the catalytic components of the fumarate reductase complex to the cell membrane, binds quinones. The polypeptide is Fumarate reductase subunit C (Haemophilus ducreyi (strain 35000HP / ATCC 700724)).